The chain runs to 423 residues: D-tagatose-1,6-bisphosphate aldolase subunit GatZ (423 aa).

The protein belongs to the GatZ/KbaZ family. GatZ subfamily. Forms a complex with GatY.

The protein operates within carbohydrate metabolism; D-tagatose 6-phosphate degradation; D-glyceraldehyde 3-phosphate and glycerone phosphate from D-tagatose 6-phosphate: step 2/2. Functionally, component of the tagatose-1,6-bisphosphate aldolase GatYZ that is required for full activity and stability of the Y subunit. Could have a chaperone-like function for the proper and stable folding of GatY. When expressed alone, GatZ does not show any aldolase activity. Is involved in the catabolism of galactitol. In Salmonella agona (strain SL483), this protein is D-tagatose-1,6-bisphosphate aldolase subunit GatZ.